A 424-amino-acid chain; its full sequence is 3-phosphoshikimate 1-carboxyvinyltransferase (424 aa).

3-phosphoshikimate is bound by residues Lys-21, Ser-22, and Arg-26. Residue Lys-21 coordinates phosphoenolpyruvate. Phosphoenolpyruvate-binding residues include Gly-92 and Arg-120. Ser-163, Ser-164, Gln-165, Ser-191, Asp-306, and Lys-333 together coordinate 3-phosphoshikimate. Position 165 (Gln-165) interacts with phosphoenolpyruvate. Catalysis depends on Asp-306, which acts as the Proton acceptor. Residues Arg-337, Arg-379, and Lys-405 each coordinate phosphoenolpyruvate.

Belongs to the EPSP synthase family. Monomer.

It is found in the cytoplasm. The catalysed reaction is 3-phosphoshikimate + phosphoenolpyruvate = 5-O-(1-carboxyvinyl)-3-phosphoshikimate + phosphate. Its pathway is metabolic intermediate biosynthesis; chorismate biosynthesis; chorismate from D-erythrose 4-phosphate and phosphoenolpyruvate: step 6/7. Functionally, catalyzes the transfer of the enolpyruvyl moiety of phosphoenolpyruvate (PEP) to the 5-hydroxyl of shikimate-3-phosphate (S3P) to produce enolpyruvyl shikimate-3-phosphate and inorganic phosphate. The polypeptide is 3-phosphoshikimate 1-carboxyvinyltransferase (Clostridium perfringens (strain SM101 / Type A)).